Here is a 396-residue protein sequence, read N- to C-terminus: Tyrosine--tRNA ligase (396 aa).

The short motif at 43-52 (PSSPDIHLGH) is the 'HIGH' region element. The short motif at 227-231 (KMSKS) is the 'KMSKS' region element. ATP is bound at residue K230. An S4 RNA-binding domain is found at 338-396 (ICVIDFIIKADLAKSKSEARRLLEQGGVEINSAKISDPGTTVKCGDIIKAGKRRYSKAV).

This sequence belongs to the class-I aminoacyl-tRNA synthetase family. TyrS type 2 subfamily. As to quaternary structure, homodimer.

It is found in the cytoplasm. It carries out the reaction tRNA(Tyr) + L-tyrosine + ATP = L-tyrosyl-tRNA(Tyr) + AMP + diphosphate + H(+). Catalyzes the attachment of tyrosine to tRNA(Tyr) in a two-step reaction: tyrosine is first activated by ATP to form Tyr-AMP and then transferred to the acceptor end of tRNA(Tyr). This chain is Tyrosine--tRNA ligase, found in Dehalococcoides mccartyi (strain ATCC BAA-2266 / KCTC 15142 / 195) (Dehalococcoides ethenogenes (strain 195)).